The sequence spans 388 residues: MGTGVGQTRAEIAQARRVVVKVGSSSLTTPQGGLDHERIRDLTDVLAERRKAGTEVVLVSSGAVAAGMAPLGLTQRPRDLATQQAAASVGQGLLLARYTAEFARHSLTAAQILLTADDLMRRAQYRNAQRAMSRLLEIGAVPIVNENDTVATHEIRFGDNDRLAALVAHLLRADVLVLLTDVDALYDGNPSLPTSTRITQVNGPEDLVGVDLGSANKRGVGTGGMITKVESARIATEAGVATVLTSAANARAALRGDPVGTFFVPAKHRRPSSRQLWLAHATAGRGSVFLDPGAVHAVVTEKASLLPAGVIKVEGDFNAGDPVDLRDENGVLVARGLVNYDSAEIPDLMGRSTRWLARELGAEYSREIVHRDDLVVLRNGSTSDREAC.

Lys21 provides a ligand contact to ATP. Substrate is bound by residues Ser61, Asp148, and Asn160. ATP is bound by residues 180 to 181 (TD) and 222 to 228 (TGGMITK). In terms of domain architecture, PUA spans 285 to 363 (RGSVFLDPGA…RWLARELGAE (79 aa)).

The protein belongs to the glutamate 5-kinase family.

Its subcellular location is the cytoplasm. The enzyme catalyses L-glutamate + ATP = L-glutamyl 5-phosphate + ADP. Its pathway is amino-acid biosynthesis; L-proline biosynthesis; L-glutamate 5-semialdehyde from L-glutamate: step 1/2. Catalyzes the transfer of a phosphate group to glutamate to form L-glutamate 5-phosphate. The sequence is that of Glutamate 5-kinase from Thermobifida fusca (strain YX).